Consider the following 1386-residue polypeptide: DNA-directed RNA polymerase subunit beta' (1386 aa).

Zn(2+) is bound by residues Cys-75, Cys-77, Cys-90, and Cys-93. Residues Asp-466, Asp-468, and Asp-470 each contribute to the Mg(2+) site. Zn(2+) contacts are provided by Cys-809, Cys-883, Cys-890, and Cys-893.

Belongs to the RNA polymerase beta' chain family. In terms of assembly, the RNAP catalytic core consists of 2 alpha, 1 beta, 1 beta' and 1 omega subunit. When a sigma factor is associated with the core the holoenzyme is formed, which can initiate transcription. Mg(2+) is required as a cofactor. Requires Zn(2+) as cofactor.

The enzyme catalyses RNA(n) + a ribonucleoside 5'-triphosphate = RNA(n+1) + diphosphate. DNA-dependent RNA polymerase catalyzes the transcription of DNA into RNA using the four ribonucleoside triphosphates as substrates. This is DNA-directed RNA polymerase subunit beta' from Oleidesulfovibrio alaskensis (strain ATCC BAA-1058 / DSM 17464 / G20) (Desulfovibrio alaskensis).